Consider the following 476-residue polypeptide: Protein DETOXIFICATION 3 (476 aa).

The next 12 membrane-spanning stretches (helical) occupy residues 35–55 (AAPM…SVMV), 66–86 (GVAL…FGLA), 117–137 (IPIC…LISL), 146–166 (VAGS…FFIP), 185–205 (LTTL…FGLG), 208–228 (GAAM…SCYV), 260–280 (AAMV…SGLL), 289–309 (VLSI…GVAA), 331–351 (VLAG…LLFT), 370–390 (VANL…TAVL), 402–422 (IGAL…GVYL), and 433–453 (LWCG…FVTA).

This sequence belongs to the multi antimicrobial extrusion (MATE) (TC 2.A.66.1) family.

It is found in the membrane. In Arabidopsis thaliana (Mouse-ear cress), this protein is Protein DETOXIFICATION 3.